The primary structure comprises 703 residues: Elongation factor G 1 (703 aa).

The tr-type G domain maps to 8–290 (ERYRNIGISA…AVIDFLPSPV (283 aa)). Residues 17-24 (AHIDAGKT), 88-92 (DTPGH), and 142-145 (NKMD) contribute to the GTP site.

It belongs to the TRAFAC class translation factor GTPase superfamily. Classic translation factor GTPase family. EF-G/EF-2 subfamily.

The protein localises to the cytoplasm. Its function is as follows. Catalyzes the GTP-dependent ribosomal translocation step during translation elongation. During this step, the ribosome changes from the pre-translocational (PRE) to the post-translocational (POST) state as the newly formed A-site-bound peptidyl-tRNA and P-site-bound deacylated tRNA move to the P and E sites, respectively. Catalyzes the coordinated movement of the two tRNA molecules, the mRNA and conformational changes in the ribosome. This is Elongation factor G 1 from Ralstonia nicotianae (strain ATCC BAA-1114 / GMI1000) (Ralstonia solanacearum).